Consider the following 118-residue polypeptide: Small ribosomal subunit protein uS13 (118 aa).

The disordered stretch occupies residues 94–118; the sequence is SLPLRGQRTKTNARTRKGPRKPIKR.

It belongs to the universal ribosomal protein uS13 family. In terms of assembly, part of the 30S ribosomal subunit. Forms a loose heterodimer with protein S19. Forms two bridges to the 50S subunit in the 70S ribosome.

In terms of biological role, located at the top of the head of the 30S subunit, it contacts several helices of the 16S rRNA. In the 70S ribosome it contacts the 23S rRNA (bridge B1a) and protein L5 of the 50S subunit (bridge B1b), connecting the 2 subunits; these bridges are implicated in subunit movement. Contacts the tRNAs in the A and P-sites. The polypeptide is Small ribosomal subunit protein uS13 (Pseudoalteromonas translucida (strain TAC 125)).